Reading from the N-terminus, the 511-residue chain is Cobyric acid synthase (511 aa).

One can recognise a GATase cobBQ-type domain in the interval 251 to 443 (LLDIAIICLP…IHGIFDNDVF (193 aa)). Cys-332 functions as the Nucleophile in the catalytic mechanism. Residue His-435 is part of the active site.

Belongs to the CobB/CobQ family. CobQ subfamily.

Its pathway is cofactor biosynthesis; adenosylcobalamin biosynthesis. In terms of biological role, catalyzes amidations at positions B, D, E, and G on adenosylcobyrinic A,C-diamide. NH(2) groups are provided by glutamine, and one molecule of ATP is hydrogenolyzed for each amidation. This Listeria monocytogenes serovar 1/2a (strain ATCC BAA-679 / EGD-e) protein is Cobyric acid synthase.